We begin with the raw amino-acid sequence, 109 residues long: Archaeosine synthase (109 aa).

The Thioimide intermediate role is filled by cysteine 21. The active-site Proton donor/acceptor is aspartate 28. Substrate is bound by residues aspartate 28, leucine 43–glutamate 46, and histidine 62–glutamate 63.

This sequence belongs to the archaeosine synthase type 2 family. Forms a symmetric tunnel-fold (T-fold) homodecamer of two head-to-head facing pentameric subunits, with 10 active sites at the intermonomer interfaces.

The enzyme catalyses 7-cyano-7-carbaguanosine(15) in tRNA + NH4(+) = archaeosine(15) in tRNA. The protein operates within tRNA modification; archaeosine-tRNA biosynthesis. In terms of biological role, is responsible for the final step in the biosynthesis of archaeosine, a modified nucleoside present in the dihydrouridine loop (D-loop) of archaeal tRNA. Catalyzes the conversion of 7-cyano-7-deazaguanine (preQ0)-modified tRNA to archaeosine-tRNA, transforming a nitrile group to a formamidine group. Can use neither glutamine nor asparagine as amino donor in vitro, is only able to utilize free ammonium. However, the enzyme might function in vivo with a partner that serves to generate ammonium. The sequence is that of Archaeosine synthase from Pyrobaculum calidifontis (strain DSM 21063 / JCM 11548 / VA1).